A 76-amino-acid polypeptide reads, in one-letter code: DNA-directed RNA polymerase subunit epsilon (76 aa).

Belongs to the RNA polymerase subunit epsilon family. RNAP is composed of a core of 2 alpha, a beta and a beta' subunit. The core is associated with a delta subunit, and at least one of epsilon or omega. When a sigma factor is associated with the core the holoenzyme is formed, which can initiate transcription.

It carries out the reaction RNA(n) + a ribonucleoside 5'-triphosphate = RNA(n+1) + diphosphate. In terms of biological role, a non-essential component of RNA polymerase (RNAP). This Lactococcus lactis subsp. cremoris (strain MG1363) protein is DNA-directed RNA polymerase subunit epsilon.